A 248-amino-acid polypeptide reads, in one-letter code: Adenosylcobinamide-GDP ribazoletransferase (248 aa).

Transmembrane regions (helical) follow at residues Leu-28–Leu-48, Val-103–Val-123, Leu-126–Val-146, Ala-169–Met-189, Met-193–Leu-213, and Val-225–Ala-245.

Belongs to the CobS family. The cofactor is Mg(2+).

It localises to the cell inner membrane. It carries out the reaction alpha-ribazole + adenosylcob(III)inamide-GDP = adenosylcob(III)alamin + GMP + H(+). The enzyme catalyses alpha-ribazole 5'-phosphate + adenosylcob(III)inamide-GDP = adenosylcob(III)alamin 5'-phosphate + GMP + H(+). It functions in the pathway cofactor biosynthesis; adenosylcobalamin biosynthesis; adenosylcobalamin from cob(II)yrinate a,c-diamide: step 7/7. Functionally, joins adenosylcobinamide-GDP and alpha-ribazole to generate adenosylcobalamin (Ado-cobalamin). Also synthesizes adenosylcobalamin 5'-phosphate from adenosylcobinamide-GDP and alpha-ribazole 5'-phosphate. In Chlorobium phaeobacteroides (strain BS1), this protein is Adenosylcobinamide-GDP ribazoletransferase.